The sequence spans 586 residues: Protein CBFA2T2 (586 aa).

The segment at 1 to 95 is disordered; the sequence is MVGIPGPYQF…SSSSSLANQQ (95 aa). Residues 56 to 68 show a composition bias toward polar residues; it reads SSHSNGINHSPPT. Positions 77–90 are enriched in low complexity; sequence QRSSNGPSSSSSSS. Residues 102–197 enclose the TAFH domain; it reads VRQLSKLKRF…TPSQYLAQHE (96 aa). 2 disordered regions span residues 204-242 and 387-417; these read STSS…AEPP and IRKG…FGSR. Residues 228 to 237 show a composition bias toward basic and acidic residues; sequence DRREEERETA. A compositionally biased stretch (low complexity) spans 399–409; that stretch reads SPSSTDSGASD. Residues 429–481 adopt a coiled-coil conformation; the sequence is RKAEEAVNEVKRQAMSEVQKAVSEAEQKAFEMIASERARMEQTIVDAKRRAAE. Residues Cys497, Cys500, Cys508, Cys511, Cys517, Cys521, His529, and Cys533 each contribute to the Zn(2+) site. The MYND-type zinc-finger motif lies at 497–533; it reads CWNCGRKASETCSGCNIARYCGSFCQHKDWEKHHRIC. The segment at 561 to 586 is disordered; sequence SPTLERSSSATSRSSTPASVTAVDGL. Residues 566 to 586 are compositionally biased toward low complexity; sequence RSSSATSRSSTPASVTAVDGL.

The protein resides in the nucleus. May act as a transcriptional corepressor. In Xenopus laevis (African clawed frog), this protein is Protein CBFA2T2 (cbfa2t2).